The primary structure comprises 159 residues: Putative 4-hydroxy-4-methyl-2-oxoglutarate aldolase (159 aa).

Residues 78-81 (GDVI) and Arg-100 contribute to the substrate site. Residue Asp-101 coordinates a divalent metal cation.

The protein belongs to the class II aldolase/RraA-like family. As to quaternary structure, homotrimer. It depends on a divalent metal cation as a cofactor.

It catalyses the reaction 4-hydroxy-4-methyl-2-oxoglutarate = 2 pyruvate. The catalysed reaction is oxaloacetate + H(+) = pyruvate + CO2. In terms of biological role, catalyzes the aldol cleavage of 4-hydroxy-4-methyl-2-oxoglutarate (HMG) into 2 molecules of pyruvate. Also contains a secondary oxaloacetate (OAA) decarboxylase activity due to the common pyruvate enolate transition state formed following C-C bond cleavage in the retro-aldol and decarboxylation reactions. This chain is Putative 4-hydroxy-4-methyl-2-oxoglutarate aldolase, found in Mycobacterium sp. (strain KMS).